The sequence spans 582 residues: Type I secretion system ATP-binding protein PrsD (582 aa).

A run of 3 helical transmembrane segments spans residues 22-42 (FIGV…GSFF), 59-79 (LIAL…FELI), and 148-168 (IAIC…GGLI). The ABC transmembrane type-1 domain occupies 22–301 (FIGVGVASAL…AIGNWRGLVA (280 aa)). The region spanning 332-568 (LTVEGLASGP…VLRPQQVERQ (237 aa)) is the ABC transporter domain. 366 to 373 (GPSASGKS) lines the ATP pocket.

The protein belongs to the ABC transporter superfamily. As to quaternary structure, part of a type I secretion system composed of PrsD and PrsE.

It is found in the cell inner membrane. Functionally, mediates secretion of glycanase ExsH. The protein is Type I secretion system ATP-binding protein PrsD (prsD) of Rhizobium meliloti (strain 1021) (Ensifer meliloti).